A 637-amino-acid chain; its full sequence is Threonine--tRNA ligase (637 aa).

Positions 1–61 constitute a TGS domain; that stretch reads MIKVTLKDGK…DKDCNLEILT (61 aa). A catalytic region spans residues 242–532; sequence DHRKIGKELD…LIEHYAGAFP (291 aa). Zn(2+)-binding residues include cysteine 333, histidine 384, and histidine 509.

Belongs to the class-II aminoacyl-tRNA synthetase family. In terms of assembly, homodimer. Requires Zn(2+) as cofactor.

It localises to the cytoplasm. The catalysed reaction is tRNA(Thr) + L-threonine + ATP = L-threonyl-tRNA(Thr) + AMP + diphosphate + H(+). In terms of biological role, catalyzes the attachment of threonine to tRNA(Thr) in a two-step reaction: L-threonine is first activated by ATP to form Thr-AMP and then transferred to the acceptor end of tRNA(Thr). Also edits incorrectly charged L-seryl-tRNA(Thr). The sequence is that of Threonine--tRNA ligase from Clostridium acetobutylicum (strain ATCC 824 / DSM 792 / JCM 1419 / IAM 19013 / LMG 5710 / NBRC 13948 / NRRL B-527 / VKM B-1787 / 2291 / W).